We begin with the raw amino-acid sequence, 685 residues long: Sodium-dependent phosphate transporter 1 (685 aa).

The next 6 helical transmembrane spans lie at 25–45 (FLWM…SVGA), 66–86 (ACIL…AKVS), 106–126 (LMAG…AASF), 162–182 (IVLS…LLFY), 201–221 (ALPI…MYSG), and 234–254 (GIIL…WFFV). A compositionally biased stretch (acidic residues) spans 482–492 (VEAEEQEEGSI). The segment at 482–513 (VEAEEQEEGSIEDVATDRKSSSSSLEERHDQD) is disordered. Over residues 496–513 (ATDRKSSSSSLEERHDQD) the composition is skewed to basic and acidic residues. The next 4 helical transmembrane spans lie at 517-537 (VSLL…FAHG), 565-585 (ATPI…LWVW), 606-626 (FSIE…GLPI), and 656-676 (IFLA…AIMA).

This sequence belongs to the inorganic phosphate transporter (PiT) (TC 2.A.20) family.

The protein localises to the cell membrane. The enzyme catalyses 2 Na(+)(out) + phosphate(out) = 2 Na(+)(in) + phosphate(in). Functionally, sodium-phosphate symporter which preferentially transports the monovalent form of phosphate with a stoichiometry of two sodium ions per phosphate ion. The sequence is that of Sodium-dependent phosphate transporter 1 (slc20a1) from Xenopus tropicalis (Western clawed frog).